A 139-amino-acid polypeptide reads, in one-letter code: Serpin-like protein HMSD (139 aa).

Positions 1-20 (MSISSALAMVFMGAKGNTAA) are cleaved as a signal peptide. N-linked (GlcNAc...) asparagine glycosylation occurs at Asn-50.

This sequence belongs to the serpin family. As to expression, highly expressed in dendritic cells and primary leukemia cells, especially those of myeloid lineage.

It localises to the secreted. Functionally, putative serine protease inhibitor. This chain is Serpin-like protein HMSD (HMSD), found in Homo sapiens (Human).